A 176-amino-acid chain; its full sequence is ATP synthase subunit b (176 aa).

Residues 26–45 (VINLAIIIGVLVYFGRGLLG) form a helical membrane-spanning segment.

It belongs to the ATPase B chain family. In terms of assembly, F-type ATPases have 2 components, F(1) - the catalytic core - and F(0) - the membrane proton channel. F(1) has five subunits: alpha(3), beta(3), gamma(1), delta(1), epsilon(1). F(0) has four main subunits: a(1), b(1), b'(1) and c(10-14). The alpha and beta chains form an alternating ring which encloses part of the gamma chain. F(1) is attached to F(0) by a central stalk formed by the gamma and epsilon chains, while a peripheral stalk is formed by the delta, b and b' chains.

It is found in the cellular thylakoid membrane. Functionally, f(1)F(0) ATP synthase produces ATP from ADP in the presence of a proton or sodium gradient. F-type ATPases consist of two structural domains, F(1) containing the extramembraneous catalytic core and F(0) containing the membrane proton channel, linked together by a central stalk and a peripheral stalk. During catalysis, ATP synthesis in the catalytic domain of F(1) is coupled via a rotary mechanism of the central stalk subunits to proton translocation. Its function is as follows. Component of the F(0) channel, it forms part of the peripheral stalk, linking F(1) to F(0). This is ATP synthase subunit b from Synechococcus sp. (strain PCC 6716).